A 640-amino-acid chain; its full sequence is Pro-neuregulin-1, membrane-bound isoform (640 aa).

The propeptide occupies 1-19 (MSERKEGRGKGKGKKKERG). Residues 1–53 (MSERKEGRGKGKGKKKERGSGKKPESAAGSQSPALPPRLKEMKSQESAAGSKL) are disordered. Over 20–242 (SGKKPESAAG…EKAEELYQKR (223 aa)) the chain is Extracellular. Positions 37–128 (PRLKEMKSQE…GNDSASANIT (92 aa)) constitute an Ig-like C2-type domain. A disulfide bridge links cysteine 57 with cysteine 112. Residues asparagine 120, asparagine 126, and asparagine 164 are each glycosylated (N-linked (GlcNAc...) asparagine). The 45-residue stretch at 178 to 222 (HLVKCAEKEKTFCVNGGECFMVKDLSNPSRYLCKCQPGFTGARCT) folds into the EGF-like domain. Intrachain disulfides connect cysteine 182–cysteine 196, cysteine 190–cysteine 210, and cysteine 212–cysteine 221. The helical transmembrane segment at 243–265 (VLTITGICIALLVVGIMCVVAYC) threads the bilayer. Topologically, residues 266–640 (KTKKQRKKLH…VIANQDPIAV (375 aa)) are cytoplasmic. The span at 334–350 (TSHYTSTAHHSTTVTQT) shows a compositional bias: low complexity. 4 disordered regions span residues 334-360 (TSHY…NGHT), 375-399 (SVEN…GGPR), 433-461 (RMSP…SMTV), and 524-588 (EYET…DTPF). Polar residues predominate over residues 351–360 (PSHSWSNGHT). The segment covering 387 to 397 (GPRGRLNGTGG) has biased composition (gly residues). Over residues 542 to 552 (ANSRRAKRTKP) the composition is skewed to basic residues. Over residues 563–574 (DSNTSSQSSNSE) the composition is skewed to low complexity.

It belongs to the neuregulin family. In terms of assembly, the cytoplasmic domain interacts with the LIM domain region of LIMK1. Forms a ternary complex with ERBB3 and ITGAV:ITGB3 or ITGA6:ITGB4. Interacts with NRDC and BACE1. Post-translationally, proteolytic cleavage close to the plasma membrane on the external face leads to the release of the soluble growth factor form. N- and O-glycosylated. Extensive glycosylation precedes the proteolytic cleavage. Type I isoforms are the predominant forms expressed in the endocardium. Isoform alpha is expressed in breast, ovary, testis, prostate, heart, skeletal muscle, lung, placenta liver, kidney, salivary gland, small intestine and brain, but not in uterus, stomach, pancreas, and spleen. Isoform 3 is the predominant form in mesenchymal cells and in non-neuronal organs, whereas isoform 6 is the major neuronal form. Isoform 8 is expressed in spinal cord and brain. Isoform 9 is the major form in skeletal muscle cells; in the nervous system it is expressed in spinal cord and brain. Also detected in adult heart, placenta, lung, liver, kidney, and pancreas. Isoform 10 is expressed in nervous system: spinal cord motor neurons, dorsal root ganglion neurons, and brain. Predominant isoform expressed in sensory and motor neurons. Not detected in adult heart, placenta, lung, liver, skeletal muscle, kidney, and pancreas. Not expressed in fetal lung, liver and kidney. Type IV isoforms are brain-specific.

The protein localises to the cell membrane. The protein resides in the secreted. It localises to the nucleus. It is found in the membrane. In terms of biological role, direct ligand for ERBB3 and ERBB4 tyrosine kinase receptors. Concomitantly recruits ERBB1 and ERBB2 coreceptors, resulting in ligand-stimulated tyrosine phosphorylation and activation of the ERBB receptors. The multiple isoforms perform diverse functions such as inducing growth and differentiation of epithelial, glial, neuronal, and skeletal muscle cells; inducing expression of acetylcholine receptor in synaptic vesicles during the formation of the neuromuscular junction; stimulating lobuloalveolar budding and milk production in the mammary gland and inducing differentiation of mammary tumor cells; stimulating Schwann cell proliferation; implication in the development of the myocardium such as trabeculation of the developing heart. Isoform 10 may play a role in motor and sensory neuron development. Binds to ERBB4. Binds to ERBB3. Acts as a ligand for integrins and binds (via EGF domain) to integrins ITGAV:ITGB3 or ITGA6:ITGB4. Its binding to integrins and subsequent ternary complex formation with integrins and ERRB3 are essential for NRG1-ERBB signaling. Induces the phosphorylation and activation of MAPK3/ERK1, MAPK1/ERK2 and AKT1. Ligand-dependent ERBB4 endocytosis is essential for the NRG1-mediated activation of these kinases in neurons. The chain is Pro-neuregulin-1, membrane-bound isoform (NRG1) from Homo sapiens (Human).